Here is a 273-residue protein sequence, read N- to C-terminus: Large ribosomal subunit protein uL2 (273 aa).

The interval 222 to 273 (GMAMNPVDHPHGGGEGRNKGIQPVSPWGTPAKGYRTRSNKRTDKYIVRRRNK) is disordered. The segment covering 229-239 (DHPHGGGEGRN) has biased composition (basic and acidic residues).

This sequence belongs to the universal ribosomal protein uL2 family. In terms of assembly, part of the 50S ribosomal subunit. Forms a bridge to the 30S subunit in the 70S ribosome.

In terms of biological role, one of the primary rRNA binding proteins. Required for association of the 30S and 50S subunits to form the 70S ribosome, for tRNA binding and peptide bond formation. It has been suggested to have peptidyltransferase activity; this is somewhat controversial. Makes several contacts with the 16S rRNA in the 70S ribosome. This is Large ribosomal subunit protein uL2 from Tolumonas auensis (strain DSM 9187 / NBRC 110442 / TA 4).